The primary structure comprises 313 residues: Olfactory receptor 56A5 (313 aa).

Residues 1 to 33 (MTLPSNNSTSPVFEFFLICFPSFQSWQHWLSLP) lie on the Extracellular side of the membrane. N-linked (GlcNAc...) asparagine glycosylation is found at Asn-6 and Asn-7. Residues 34 to 54 (LSLLFLLAMGANATLLITIYL) traverse the membrane as a helical segment. Over 55-67 (EASLHQPLYYLLS) the chain is Cytoplasmic. Residues 68-88 (LLSLLDIVLCLTVIPKVLAIF) traverse the membrane as a helical segment. Residues 89–100 (WFDLRSISFPAC) lie on the Extracellular side of the membrane. Cys-100 and Cys-182 form a disulfide bridge. The chain crosses the membrane as a helical span at residues 101–121 (FLQVFIMNSFLTMESCTFMIM). The Cytoplasmic portion of the chain corresponds to 122–146 (AYDRYVAICKPLQYSSIITDQFVAR). Residues 147–167 (AAIFVVARNGLLTMPIPILSS) form a helical membrane-spanning segment. The Extracellular segment spans residues 168-203 (RLRYCAGHIIKNCICTNVSVSKLSCDDITLNQSYQF). Residues Asn-184 and Asn-198 are each glycosylated (N-linked (GlcNAc...) asparagine). A helical membrane pass occupies residues 204–224 (VIGWTLLGSDLILIVLSYFFI). The Cytoplasmic portion of the chain corresponds to 225–246 (LKTVLRIKGEGDMAKALGTCGS). The chain crosses the membrane as a helical span at residues 247–267 (HFILILFFTTVLLVLVITNLA). Residues 268–276 (RKRIPPDVP) are Extracellular-facing. Residues 277 to 297 (ILLNILHHLIPPALNPIVYGV) traverse the membrane as a helical segment. Over 298–313 (RTKEIKQGIQNLLRRL) the chain is Cytoplasmic.

The protein belongs to the G-protein coupled receptor 1 family.

It localises to the cell membrane. Its function is as follows. Odorant receptor. The chain is Olfactory receptor 56A5 (OR56A5) from Homo sapiens (Human).